A 182-amino-acid polypeptide reads, in one-letter code: UPF0316 protein BCQ_3166 (182 aa).

A run of 3 helical transmembrane segments spans residues 6 to 26, 32 to 52, and 58 to 78; these read LIFVLQIIYVPILTIRTILLV, SAAAVGLLEGAIYIVSLGIVF, and WMNIVAYVIGFSAGLLLGGYI.

Belongs to the UPF0316 family.

It is found in the cell membrane. The polypeptide is UPF0316 protein BCQ_3166 (Bacillus cereus (strain Q1)).